Here is a 350-residue protein sequence, read N- to C-terminus: tRNA dimethylallyltransferase (350 aa).

ATP is bound at residue 34–41; it reads GPTASGKT. 36-41 is a substrate binding site; the sequence is TASGKT. Interaction with substrate tRNA regions lie at residues 63-66, 187-191, and 274-279; these read DSAL, QRIQR, and RCVGYR.

The protein belongs to the IPP transferase family. In terms of assembly, monomer. Mg(2+) serves as cofactor.

It carries out the reaction adenosine(37) in tRNA + dimethylallyl diphosphate = N(6)-dimethylallyladenosine(37) in tRNA + diphosphate. In terms of biological role, catalyzes the transfer of a dimethylallyl group onto the adenine at position 37 in tRNAs that read codons beginning with uridine, leading to the formation of N6-(dimethylallyl)adenosine (i(6)A). The sequence is that of tRNA dimethylallyltransferase from Paracidovorax citrulli (strain AAC00-1) (Acidovorax citrulli).